The chain runs to 178 residues: Translation initiation factor IF-3 (178 aa).

The protein belongs to the IF-3 family. Monomer.

Its subcellular location is the cytoplasm. Its function is as follows. IF-3 binds to the 30S ribosomal subunit and shifts the equilibrium between 70S ribosomes and their 50S and 30S subunits in favor of the free subunits, thus enhancing the availability of 30S subunits on which protein synthesis initiation begins. In Picosynechococcus sp. (strain ATCC 27264 / PCC 7002 / PR-6) (Agmenellum quadruplicatum), this protein is Translation initiation factor IF-3.